The chain runs to 344 residues: RNA 3'-terminal phosphate cyclase (344 aa).

ATP-binding positions include Gln-102 and 284–288 (FLGDQ). His-308 functions as the Tele-AMP-histidine intermediate in the catalytic mechanism.

It belongs to the RNA 3'-terminal cyclase family. Type 1 subfamily.

It localises to the cytoplasm. It catalyses the reaction a 3'-end 3'-phospho-ribonucleotide-RNA + ATP = a 3'-end 2',3'-cyclophospho-ribonucleotide-RNA + AMP + diphosphate. In terms of biological role, catalyzes the conversion of 3'-phosphate to a 2',3'-cyclic phosphodiester at the end of RNA. The mechanism of action of the enzyme occurs in 3 steps: (A) adenylation of the enzyme by ATP; (B) transfer of adenylate to an RNA-N3'P to produce RNA-N3'PP5'A; (C) and attack of the adjacent 2'-hydroxyl on the 3'-phosphorus in the diester linkage to produce the cyclic end product. The biological role of this enzyme is unknown but it is likely to function in some aspects of cellular RNA processing. The protein is RNA 3'-terminal phosphate cyclase of Thermococcus gammatolerans (strain DSM 15229 / JCM 11827 / EJ3).